The sequence spans 449 residues: UDP-N-acetylmuramoylalanine--D-glutamate ligase (449 aa).

Residue 107-113 (GSNGKST) coordinates ATP.

This sequence belongs to the MurCDEF family.

The protein resides in the cytoplasm. It catalyses the reaction UDP-N-acetyl-alpha-D-muramoyl-L-alanine + D-glutamate + ATP = UDP-N-acetyl-alpha-D-muramoyl-L-alanyl-D-glutamate + ADP + phosphate + H(+). It functions in the pathway cell wall biogenesis; peptidoglycan biosynthesis. Cell wall formation. Catalyzes the addition of glutamate to the nucleotide precursor UDP-N-acetylmuramoyl-L-alanine (UMA). This chain is UDP-N-acetylmuramoylalanine--D-glutamate ligase, found in Hydrogenovibrio crunogenus (strain DSM 25203 / XCL-2) (Thiomicrospira crunogena).